We begin with the raw amino-acid sequence, 411 residues long: Proteasome-activating nucleotidase 2 (411 aa).

Positions 35-75 form a coiled coil; the sequence is IVAVNGELQAQLDDVEARREELREEVNRLQRENETLKTASL. Residues 196–201 and histidine 335 each bind ATP; that span reads GTGKTM. The docks into pockets in the proteasome alpha-ring to cause gate opening stretch occupies residues 408-411; sequence SYIQ.

The protein belongs to the AAA ATPase family. In terms of assembly, homohexamer. The hexameric complex has a two-ring architecture resembling a top hat that caps the 20S proteasome core at one or both ends. Upon ATP-binding, the C-terminus of PAN interacts with the alpha-rings of the proteasome core by binding to the intersubunit pockets.

Its subcellular location is the cytoplasm. Its function is as follows. ATPase which is responsible for recognizing, binding, unfolding and translocation of substrate proteins into the archaeal 20S proteasome core particle. Is essential for opening the gate of the 20S proteasome via an interaction with its C-terminus, thereby allowing substrate entry and access to the site of proteolysis. Thus, the C-termini of the proteasomal ATPase function like a 'key in a lock' to induce gate opening and therefore regulate proteolysis. Unfolding activity requires energy from ATP hydrolysis, whereas ATP binding alone promotes ATPase-20S proteasome association which triggers gate opening, and supports translocation of unfolded substrates. In Halobacterium salinarum (strain ATCC 700922 / JCM 11081 / NRC-1) (Halobacterium halobium), this protein is Proteasome-activating nucleotidase 2.